The sequence spans 60 residues: Large ribosomal subunit protein bL32 (60 aa).

The disordered stretch occupies residues Met-1–Leu-27. Residues Lys-13–Lys-25 show a composition bias toward basic residues.

This sequence belongs to the bacterial ribosomal protein bL32 family.

The chain is Large ribosomal subunit protein bL32 from Protochlamydia amoebophila (strain UWE25).